We begin with the raw amino-acid sequence, 261 residues long: Beta cell expansion factor A (261 aa).

An N-terminal signal peptide occupies residues 1–21 (MNKRNWLLALSLSLAFSPCYA). Residues 99-261 (KTAKEARIAI…IDKDLTETSR (163 aa)) are SYLF domain.

The protein resides in the secreted. It localises to the host. In terms of biological role, stimulates the proliferation of insulin-producing beta cells during development in gnotobiotic zebrafish and mice. BefA is a microbiome-derived protein that traffics from the host intestinal lumen to the pancreas to act directly on pancreatic islets. In pancreas, interacts directly with host beta cells and elicits their proliferation via a mechanism of increasing membrane permeabilization. Can also permeabilize bacterial cell membranes, but does not show killing of target bacteria. This Aeromonas veronii protein is Beta cell expansion factor A.